The chain runs to 4010 residues: Extracellular matrix organizing protein FRAS1 (4010 aa).

Residues 1-25 (MGVLKAWLGVALALAEFAVLPNCEG) form the signal peptide. VWFC domains follow at residues 26–87 (ACLY…PQCA), 92–152 (GSCH…PICV), 156–216 (KPCS…SQCS), 218–278 (RSCS…EECA), and 282–342 (RSCS…PECI). The Extracellular segment spans residues 26–3903 (ACLYQGSFLA…AASLSQTGAS (3878 aa)). Ser343 carries the phosphoserine modification. The VWFC 6 domain maps to 358–416 (SSSAREIKHVPDGEKWEEGPCKLCECREAQVTCYEPSCPPCPVATLALVVKGQCCPDCT). 14 FU repeats span residues 408–459 (KGQC…GFYQ), 461–504 (GSLC…GFYQ), 506–552 (HHSC…GFYN), 554–598 (QGTC…GYYA), 601–646 (TGSC…GFYP), 648–704 (HGIC…HFYL), 707–752 (TGLC…THFN), 754–799 (EGTC…EQFL), 802–851 (VGYC…GHYK), 853–899 (RGTC…GHYL), 902–947 (NQVC…QYYL), 951–996 (TKTC…QHYR), 998–1041 (SGSC…GYFA), and 1045–1088 (KHRC…GFSG). Asn727 is a glycosylation site (N-linked (GlcNAc...) asparagine). N-linked (GlcNAc...) asparagine glycans are attached at residues Asn1094 and Asn1107. CSPG repeat units lie at residues 1101–1196 (TPSL…LKIS), 1216–1307 (APYV…FQAN), 1328–1440 (ALRL…FQVS), 1465–1561 (APKL…FSFA), 1597–1691 (PAFQ…ISVT), 1712–1812 (GPRL…FSVS), and 1834–1938 (PPHI…FYVS). A glycan (N-linked (GlcNAc...) asparagine) is linked at Asn1506. An N-linked (GlcNAc...) asparagine glycan is attached at Asn1779. Residues Asn1950 and Asn1980 are each glycosylated (N-linked (GlcNAc...) asparagine). CSPG repeat units follow at residues 1959-2059 (EPPR…FSLT), 2080-2179 (IPHL…FDVV), 2201-2293 (PPVV…FVLS), 2313-2406 (ARPL…FTVS), and 2441-2538 (TPRI…FLVK). Calx-beta domains lie at 2545–2648 (VSDN…VGLS), 2661–2772 (AKVV…IALA), 2786–2892 (AKVL…VFLS), 2907–3009 (IAIN…VYLG), and 3027–3131 (ATVT…LVLG). Asn2565, Asn2666, and Asn2684 each carry an N-linked (GlcNAc...) asparagine glycan. N-linked (GlcNAc...) asparagine glycosylation is found at Asn2910, Asn2987, Asn3072, Asn3220, Asn3678, and Asn3877. Residues 3904-3924 (IGSALAAIMLLLLLFLVACFV) traverse the membrane as a helical segment. Residues 3925–4010 (TRKCQKQKKK…HNNLQDGTEV (86 aa)) lie on the Cytoplasmic side of the membrane.

This sequence belongs to the FRAS1 family.

The protein resides in the cell membrane. Functionally, involved in extracellular matrix organization. Required for the regulation of epidermal-basement membrane adhesion responsible for proper organogenesis during embryonic development. Involved in brain organization and function. This Mus musculus (Mouse) protein is Extracellular matrix organizing protein FRAS1.